A 475-amino-acid chain; its full sequence is Ribulose bisphosphate carboxylase large chain (475 aa).

The propeptide occupies 1-2; the sequence is MS. Residue proline 3 is modified to N-acetylproline. At lysine 14 the chain carries N6,N6,N6-trimethyllysine. Substrate is bound by residues asparagine 123 and threonine 173. The active-site Proton acceptor is the lysine 175. Substrate is bound at residue lysine 177. Lysine 201, aspartate 203, and glutamate 204 together coordinate Mg(2+). Position 201 is an N6-carboxylysine (lysine 201). Catalysis depends on histidine 294, which acts as the Proton acceptor. Residues arginine 295, histidine 327, and serine 379 each contribute to the substrate site.

This sequence belongs to the RuBisCO large chain family. Type I subfamily. Heterohexadecamer of 8 large chains and 8 small chains; disulfide-linked. The disulfide link is formed within the large subunit homodimers. Mg(2+) serves as cofactor. Post-translationally, the disulfide bond which can form in the large chain dimeric partners within the hexadecamer appears to be associated with oxidative stress and protein turnover.

It localises to the plastid. Its subcellular location is the chloroplast. It catalyses the reaction 2 (2R)-3-phosphoglycerate + 2 H(+) = D-ribulose 1,5-bisphosphate + CO2 + H2O. The enzyme catalyses D-ribulose 1,5-bisphosphate + O2 = 2-phosphoglycolate + (2R)-3-phosphoglycerate + 2 H(+). Its function is as follows. RuBisCO catalyzes two reactions: the carboxylation of D-ribulose 1,5-bisphosphate, the primary event in carbon dioxide fixation, as well as the oxidative fragmentation of the pentose substrate in the photorespiration process. Both reactions occur simultaneously and in competition at the same active site. This is Ribulose bisphosphate carboxylase large chain from Pinus edulis (Pinyon pine).